The chain runs to 579 residues: Arginine--tRNA ligase (579 aa).

Residues 127-137 carry the 'HIGH' region motif; that stretch reads ANPTGPLHVGH.

Belongs to the class-I aminoacyl-tRNA synthetase family. Monomer.

The protein localises to the cytoplasm. The enzyme catalyses tRNA(Arg) + L-arginine + ATP = L-arginyl-tRNA(Arg) + AMP + diphosphate. This is Arginine--tRNA ligase from Acidithiobacillus ferrooxidans (strain ATCC 23270 / DSM 14882 / CIP 104768 / NCIMB 8455) (Ferrobacillus ferrooxidans (strain ATCC 23270)).